The sequence spans 389 residues: Aspartic protease pepA (389 aa).

The N-terminal stretch at 1 to 20 is a signal peptide; it reads MVLINQLGAVLAVCATLTVA. Positions 21-67 are cleaved as a propeptide — activation peptide; that stretch reads APTKGKARFNVPQVAIPKKMVHHPAVSYARALHKFGMKVPKTVQDAA. Residues 82 to 386 enclose the Peptidase A1 domain; it reads YVTQVTVGEG…DTQGPRIGFA (305 aa). Aspartate 98 is an active-site residue. Asparagine 257 is a glycosylation site (N-linked (GlcNAc...) asparagine). The active site involves aspartate 279. A disulfide bridge links cysteine 315 with cysteine 348.

Belongs to the peptidase A1 family. As to quaternary structure, monomer.

The protein localises to the secreted. Secreted aspartic endopeptidase that allows assimilation of proteinaceous substrates. The scissile peptide bond is attacked by a nucleophilic water molecule activated by two aspartic residues in the active site. Shows a broad primary substrate specificity. Favors hydrophobic residues at the P1 and P1' positions. The polypeptide is Aspartic protease pepA (Arthroderma otae (strain ATCC MYA-4605 / CBS 113480) (Microsporum canis)).